The chain runs to 132 residues: Small ribosomal subunit protein uS8 (132 aa).

The protein belongs to the universal ribosomal protein uS8 family. Part of the 30S ribosomal subunit. Contacts proteins S5 and S12.

Functionally, one of the primary rRNA binding proteins, it binds directly to 16S rRNA central domain where it helps coordinate assembly of the platform of the 30S subunit. This Saccharopolyspora erythraea (strain ATCC 11635 / DSM 40517 / JCM 4748 / NBRC 13426 / NCIMB 8594 / NRRL 2338) protein is Small ribosomal subunit protein uS8.